We begin with the raw amino-acid sequence, 636 residues long: p-hydroxybenzoate-m-hydroxylase A (636 aa).

FAD is bound by residues 10–39, 241–243, tyrosine 289, and aspartate 310; these read DIVI…HIDN and RLY. Residues 11–28 form a helical membrane-spanning segment; that stretch reads IVIVGAGPVGIVLSLCMS.

This sequence belongs to the PheA/TfdB FAD monooxygenase family. The cofactor is FAD.

Its subcellular location is the membrane. The enzyme catalyses 4-hydroxybenzoate + NADH + O2 + H(+) = 3,4-dihydroxybenzoate + NAD(+) + H2O. The catalysed reaction is 4-hydroxybenzoate + NADPH + O2 + H(+) = 3,4-dihydroxybenzoate + NADP(+) + H2O. Its function is as follows. FAD-dependent monooxygenase; part of the benzoic acid degradation pathway also known as the protocatechuic acid pathway. Benzoic acid debradation begins with the conversion of benzoic acid into 4-hydroxybenzoic acid through hydroxylation by the benzoate-4-monooxygenase bphA, and its partner NADPH-cytochrome P450 reductase cprA which act as a mediator in electron donation from NADPH. 4-Hydroxybenzoic acid is then converted into 3,4-dihydroxybenzoic acid (also called protocatechuic acid) by the p-hydroxybenzoate-m-hydroxylase phhA. Protocatechuic acid is converted into 3-carboxy-cis,cis-muconic acid by the intradiol ring-cleavage dioxygenase prcA, which is further metabolized through the 3-oxoadipate pathway to finally enter the tricarboxylic acid cycle (TCA). In Aspergillus niger (strain ATCC MYA-4892 / CBS 513.88 / FGSC A1513), this protein is p-hydroxybenzoate-m-hydroxylase A.